Here is a 350-residue protein sequence, read N- to C-terminus: Ion-translocating oxidoreductase complex subunit D (350 aa).

Transmembrane regions (helical) follow at residues 25–45 (ILCALPGVAVQCFFFGWGTVI), 89–109 (IPPLAPWWVTVIGTLFAIVIV), and 129–149 (VMLLISFPVQMTSWVAPSVIA). Thr-185 carries the FMN phosphoryl threonine modification. The next 5 helical transmembrane spans lie at 212-232 (GFGVGWFWVNLAYLAGGLVML), 239-259 (WHITAGILAALFICSGVGYLL), 264-284 (FTGPLLHLFSGATMLAAFFIA), 298-318 (LVFGALIGILVYIIRTFGGYP), and 319-339 (DAFAFAILLANLCAPFIDHYM).

It belongs to the NqrB/RnfD family. As to quaternary structure, the complex is composed of six subunits: RnfA, RnfB, RnfC, RnfD, RnfE and RnfG. FMN serves as cofactor.

It localises to the cell inner membrane. Its function is as follows. Part of a membrane-bound complex that couples electron transfer with translocation of ions across the membrane. This Shewanella sediminis (strain HAW-EB3) protein is Ion-translocating oxidoreductase complex subunit D.